The following is a 271-amino-acid chain: Aquaporin-2 (271 aa).

Residues 1 to 11 are Cytoplasmic-facing; sequence MWELRSIAFSR. A helical transmembrane segment spans residues 12–32; the sequence is AVLAEFLATLLFVFFGLGSAL. The Extracellular segment spans residues 33–40; it reads NWPQALPS. Residues 41 to 59 form a helical membrane-spanning segment; sequence VLQIAMAFGLAIGTLVQAL. Residues 60 to 64 lie on the Cytoplasmic side of the membrane; sequence GHVSG. Residues 65–74 constitute an intramembrane region (discontinuously helical); the sequence is AHINPAVTVA. Positions 68 to 70 match the NPA 1 motif; sequence NPA. At 75–85 the chain is on the cytoplasmic side; it reads CLVGCHVSFLR. The helical transmembrane segment at 86–107 threads the bilayer; that stretch reads AVFYVAAQLLGAVAGAALLHEI. Topologically, residues 108–127 are extracellular; sequence TPPAIRGDLAVNALNNNSTA. N-linked (GlcNAc...) asparagine glycosylation is present at asparagine 123. The chain crosses the membrane as a helical span at residues 128–148; it reads GQAVTVELFLTLQLVLCIFAS. The Cytoplasmic portion of the chain corresponds to 149–156; that stretch reads TDERRGDN. The chain crosses the membrane as a helical span at residues 157-176; sequence VGTPALSIGFSVALGHLLGI. At 177–180 the chain is on the extracellular side; the sequence is HYTG. Residues 181–193 constitute an intramembrane region (discontinuously helical); that stretch reads CSMNPARSLAPAI. An NPA 2 motif is present at residues 184-186; the sequence is NPA. Residues 194–201 lie on the Extracellular side of the membrane; the sequence is VTGKFDDH. The chain crosses the membrane as a helical span at residues 202 to 222; it reads WVFWIGPLVGAIVASLLYNYV. Over 223 to 271 the chain is Cytoplasmic; sequence LFPPAKSLSERLAVLKGLEPDTDWEEREVRRRQSVELHSPQSLPRGSKA. The disordered stretch occupies residues 251–271; it reads VRRRQSVELHSPQSLPRGSKA. Residue serine 256 is modified to Phosphoserine. Over residues 261–271 the composition is skewed to polar residues; that stretch reads SPQSLPRGSKA.

It belongs to the MIP/aquaporin (TC 1.A.8) family. In terms of assembly, homotetramer. Post-translationally, ser-256 phosphorylation is necessary and sufficient for expression at the apical membrane. Endocytosis is not phosphorylation-dependent. In terms of processing, N-glycosylated.

The protein localises to the apical cell membrane. It is found in the basolateral cell membrane. Its subcellular location is the cell membrane. The protein resides in the cytoplasmic vesicle membrane. It localises to the golgi apparatus. The protein localises to the trans-Golgi network membrane. The enzyme catalyses H2O(in) = H2O(out). The catalysed reaction is glycerol(in) = glycerol(out). In terms of biological role, forms a water-specific channel that provides the plasma membranes of renal collecting duct with high permeability to water, thereby permitting water to move in the direction of an osmotic gradient. Could also be permeable to glycerol. In Bos taurus (Bovine), this protein is Aquaporin-2.